A 917-amino-acid polypeptide reads, in one-letter code: MEANQEASLFLVKILEELDSKQNTVSYQDLCKSLCAQFDLSQLAKLRSVLFYTACLDPNFPATLFKDKMKCSVNNQQSKKIMVAADIVTIFNLIQMNGGTAKEKLPMSCHKVRKKEASFESCRSDTEVCSPTVCEPLNCELSERPFSRGYPTRQSSKCRKMDCKECPQFVPASEPNFLLGVSKEVKNRAASLDRLQALSPYSVASPQPCEMQRTYFPMNIENEPMSDQDSLPISQGIKETFISSEEPFVVQSCVQKRNIFKEDFHNLMTVSPSLVGTTNKAEEGHGEPQSQKELHKPPFFNHSFEMPYHNQYLNPVYSPIPDKRRAKHESLDDLQASTYFGPTPVMGTQDTRRCPGRSSKQTPWPAKSWSLNTEEVPDFERSFFNRNPSEEKLRYPNSGSQTPNFSGPDRHPVYLVPKDQQKVLPAGYAVKPNGLKSKEISSPVDLEKHEAVKKFKDKSISCTSGQHSSDTSSVGTQTEQHVLDPPKCKDLCTSGQAKYGDRHAMKQSDDDSEIVSDDISDIFRFLDDMSISGSTGVIQSSCYNSTGSLSQLHKSDCDSSPEHHLAKITNGVSSGKGDKCNRPENVHHSEEELKSSVCKLVLRIGEIERKLESLSGVREEISQVLGKLNKLDQKIQQPEKVNVQIDLNSLTSEAPSDDSASPRVFRAHSGSHGPKLENSPDWCCSDASGSNSESLRVKALKKSLFTRPSSRSLTEENSATESKIASISNSPRDWRTITYTNRMSLNEEEIKDAGPANNKDWHRKSKEADRQYDIPPQHRLPKQPKDGFLVEQVFSPHPYPTSLKGHMKSNPLYTDMRLTELAEVKRGQPSWTIEEYARNSGDKGKLTALDLQTQESLNPNNLEYWMEDIYTPGYDSLLKRKEAEFRRAKVCKIAALITAAACTVILVIVVPICTMKS.

Over 1-892 the chain is Cytoplasmic; sequence MEANQEASLF…AEFRRAKVCK (892 aa). 7 disordered regions span residues 337 to 367, 388 to 410, 461 to 483, 568 to 588, 652 to 687, 706 to 727, and 746 to 783; these read STYFGPTPVMGTQDTRRCPGRSSKQTPWPAK, PSEEKLRYPNSGSQTPNFSGPDR, SCTSGQHSSDTSSVGTQTEQHVL, ITNGVSSGKGDKCNRPENVHH, SEAPSDDSASPRVFRAHSGSHGPKLENSPDWCCSDA, TRPSSRSLTEENSATESKIASI, and NEEEIKDAGPANNKDWHRKSKEADRQYDIPPQHRLPKQ. The segment covering 461-480 has biased composition (polar residues); that stretch reads SCTSGQHSSDTSSVGTQTEQ. The segment covering 576–588 has biased composition (basic and acidic residues); that stretch reads KGDKCNRPENVHH. Position 712 is a phosphoserine (serine 712). Residues 893 to 913 traverse the membrane as a helical segment; that stretch reads IAALITAAACTVILVIVVPIC. Residues 914–917 lie on the Extracellular side of the membrane; that stretch reads TMKS.

Belongs to the MINAR family. In terms of assembly, interacts with NOTCH2; this interaction increases MINAR1 stability. Interacts (via N-terminus) with DEPTOR (via PDZ domain); this interaction may stabilize DEPTOR protein by impairing its ubiquitination. As to expression, expressed in brain and in islets of Langerhans.

Its subcellular location is the cell membrane. Functionally, intrinsically disordered protein which may negatively regulate mTOR signaling pathway by stabilizing the mTOR complex component DEPTOR. Negatively regulates angiogenesis. Negatively regulates cell growth. Negatively regulates neurite outgrowth in hippocampal neurons. This is Major intrinsically disordered Notch2-binding receptor 1 (Minar1) from Mus musculus (Mouse).